A 324-amino-acid polypeptide reads, in one-letter code: DNA-directed RNA polymerase subunit alpha (324 aa).

An alpha N-terminal domain (alpha-NTD) region spans residues 1–228; sequence MIEIQKPTIR…EHFNLFTDLS (228 aa). Residues 245 to 324 form an alpha C-terminal domain (alpha-CTD) region; that stretch reads RNKLLDMTIE…STPKGEEEEK (80 aa).

The protein belongs to the RNA polymerase alpha chain family. As to quaternary structure, homodimer. The RNAP catalytic core consists of 2 alpha, 1 beta, 1 beta' and 1 omega subunit. When a sigma factor is associated with the core the holoenzyme is formed, which can initiate transcription.

The enzyme catalyses RNA(n) + a ribonucleoside 5'-triphosphate = RNA(n+1) + diphosphate. Functionally, DNA-dependent RNA polymerase catalyzes the transcription of DNA into RNA using the four ribonucleoside triphosphates as substrates. This is DNA-directed RNA polymerase subunit alpha from Caldicellulosiruptor saccharolyticus (strain ATCC 43494 / DSM 8903 / Tp8T 6331).